The primary structure comprises 205 residues: Ephrin-A1 (205 aa).

Positions 1–17 are cleaved as a signal peptide; the sequence is MEFLWAPLLGLCCSLAA. One can recognise an Ephrin RBD domain in the interval 18–161; the sequence is ADRHIVFWNS…THNPQAHVNP (144 aa). N-linked (GlcNAc...) asparagine glycosylation is present at asparagine 26. 2 disulfides stabilise this stretch: cysteine 51-cysteine 92 and cysteine 80-cysteine 140. Serine 182 is lipidated: GPI-anchor amidated serine. The propeptide at 183 to 205 is removed in mature form; that stretch reads AAPRLFPLVWAVLLLPLLLLQSQ.

This sequence belongs to the ephrin family. In terms of assembly, monomer. Homodimer. Forms heterodimers with EPHA2. Binds to the receptor tyrosine kinases EPHA2, EPHA3, EPHA4, EPHA5, EPHA6 and EPHA7. Also binds with low affinity to EPHA1. Undergoes proteolysis by a metalloprotease to give rise to a soluble monomeric form. Post-translationally, N-Glycosylation is required for binding to EPHA2 receptor and inducing its internalization. Expressed in myogenic progenitor cells.

The protein resides in the cell membrane. The protein localises to the secreted. Cell surface GPI-bound ligand for Eph receptors, a family of receptor tyrosine kinases which are crucial for migration, repulsion and adhesion during neuronal, vascular and epithelial development. Binds promiscuously Eph receptors residing on adjacent cells, leading to contact-dependent bidirectional signaling into neighboring cells. Plays an important role in angiogenesis and tumor neovascularization. The recruitment of VAV2, VAV3 and PI3-kinase p85 subunit by phosphorylated EPHA2 is critical for EFNA1-induced RAC1 GTPase activation and vascular endothelial cell migration and assembly. Exerts anti-oncogenic effects in tumor cells through activation and down-regulation of EPHA2. Activates EPHA2 by inducing tyrosine phosphorylation which leads to its internalization and degradation. Acts as a negative regulator in the tumorigenesis of gliomas by down-regulating EPHA2 and FAK. Can evoke collapse of embryonic neuronal growth cone and regulates dendritic spine morphogenesis. In Mus musculus (Mouse), this protein is Ephrin-A1 (Efna1).